The following is an 84-amino-acid chain: U1-hexatoxin-Iw1a (84 aa).

The first 18 residues, 1–18 (MLKFVVVICLVIMAITFA), serve as a signal peptide directing secretion. 5 disulfide bridges follow: cysteine 21–cysteine 32, cysteine 26–cysteine 40, cysteine 31–cysteine 66, cysteine 50–cysteine 74, and cysteine 68–cysteine 81.

It belongs to the MIT-like AcTx family. In terms of tissue distribution, expressed by the venom gland.

The protein localises to the secreted. In Illawarra wisharti (Illawarra funnel-web spider), this protein is U1-hexatoxin-Iw1a.